A 938-amino-acid polypeptide reads, in one-letter code: Breast cancer type 2 susceptibility protein homolog (938 aa).

Composition is skewed to basic and acidic residues over residues 320-339 (LEPS…ESKI) and 409-425 (NSIK…ETPN). 2 disordered regions span residues 320 to 359 (LEPS…TTVL) and 409 to 434 (NSIK…SSHQ). 3 BRCA2 repeats span residues 537–571 (AEPE…EFQY), 638–672 (NEPQ…QSRA), and 713–747 (SETE…EFQA). A compositionally biased stretch (polar residues) spans 870-879 (SSTETSTSCA). A disordered region spans residues 870–938 (SSTETSTSCA…RRLGLSRSRY (69 aa)). Residues 898-915 (ADRDLNRSKDCAKNRQDA) are compositionally biased toward basic and acidic residues. The segment covering 926-938 (KKSRRLGLSRSRY) has biased composition (basic residues).

In terms of assembly, interacts with Rad9 and spn-A/Rad51.

It localises to the nucleus. Its function is as follows. Involved in and required for double-strand break repair by meiotic and mitotic homologous recombination. During meiosis, has a dual role in the repair of meiotic double-stranded breaks and the efficient activation of the meiotic recombination checkpoint. This Drosophila sechellia (Fruit fly) protein is Breast cancer type 2 susceptibility protein homolog.